The primary structure comprises 510 residues: Maturase K (510 aa).

Belongs to the intron maturase 2 family. MatK subfamily.

The protein resides in the plastid. It is found in the chloroplast. In terms of biological role, usually encoded in the trnK tRNA gene intron. Probably assists in splicing its own and other chloroplast group II introns. The sequence is that of Maturase K from Cestrum elegans (Red cestrum).